We begin with the raw amino-acid sequence, 164 residues long: Succinate dehydrogenase assembly factor 2, mitochondrial (164 aa).

The protein belongs to the SDHAF2 family. Interacts with the flavoprotein subunit within the SDH catalytic dimer.

The protein resides in the mitochondrion matrix. Plays an essential role in the assembly of succinate dehydrogenase (SDH), an enzyme complex (also referred to as respiratory complex II) that is a component of both the tricarboxylic acid (TCA) cycle and the mitochondrial electron transport chain, and which couples the oxidation of succinate to fumarate with the reduction of ubiquinone (coenzyme Q) to ubiquinol. Required for flavinylation (covalent attachment of FAD) of the flavoprotein subunit of the SDH catalytic dimer. The chain is Succinate dehydrogenase assembly factor 2, mitochondrial from Lodderomyces elongisporus (strain ATCC 11503 / CBS 2605 / JCM 1781 / NBRC 1676 / NRRL YB-4239) (Yeast).